We begin with the raw amino-acid sequence, 159 residues long: Large ribosomal subunit protein uL11 (159 aa).

Residues 1 to 26 are disordered; sequence MAGTIEVLVPGGKANPGPPLGPELGP.

This sequence belongs to the universal ribosomal protein uL11 family. As to quaternary structure, part of the ribosomal stalk of the 50S ribosomal subunit. Interacts with L10 and the large rRNA to form the base of the stalk. L10 forms an elongated spine to which L12 dimers bind in a sequential fashion forming a multimeric L10(L12)X complex.

Its function is as follows. Forms part of the ribosomal stalk which helps the ribosome interact with GTP-bound translation factors. The protein is Large ribosomal subunit protein uL11 of Haloferax volcanii (strain ATCC 29605 / DSM 3757 / JCM 8879 / NBRC 14742 / NCIMB 2012 / VKM B-1768 / DS2) (Halobacterium volcanii).